An 868-amino-acid chain; its full sequence is LPS-assembly protein LptD (868 aa).

The signal sequence occupies residues 1 to 24; sequence MLKGIHKYLLMCFGTVLFTVQANA.

The protein belongs to the LptD family. As to quaternary structure, component of the lipopolysaccharide transport and assembly complex. Interacts with LptE and LptA.

Its subcellular location is the cell outer membrane. Its function is as follows. Together with LptE, is involved in the assembly of lipopolysaccharide (LPS) at the surface of the outer membrane. This Francisella tularensis subsp. tularensis (strain FSC 198) protein is LPS-assembly protein LptD.